Consider the following 859-residue polypeptide: Active breakpoint cluster region-related protein (859 aa).

The disordered stretch occupies residues Thr-26–Glu-84. Residues Pro-54–Ser-64 are compositionally biased toward polar residues. Phosphoserine is present on Ser-57. In terms of domain architecture, DH spans Met-91 to Asp-284. One can recognise a PH domain in the interval Gln-301–Lys-459. Positions Thr-484–Ile-613 constitute a C2 domain. The Rho-GAP domain occupies Val-647–Phe-845.

Interacts with DLG4. Highly enriched in the brain. Much weaker expression in heart, lung and muscle.

It is found in the cell projection. The protein resides in the dendritic spine. The protein localises to the axon. It localises to the synapse. In terms of biological role, protein with a unique structure having two opposing regulatory activities toward small GTP-binding proteins. The C-terminus is a GTPase-activating protein domain which stimulates GTP hydrolysis by RAC1, RAC2 and CDC42. Accelerates the intrinsic rate of GTP hydrolysis of RAC1 or CDC42, leading to down-regulation of the active GTP-bound form. The central Dbl homology (DH) domain functions as a guanine nucleotide exchange factor (GEF) that modulates the GTPases CDC42, RHOA and RAC1. Promotes the conversion of CDC42, RHOA and RAC1 from the GDP-bound to the GTP-bound form. Functions as an important negative regulator of neuronal RAC1 activity. Regulates macrophage functions such as CSF-1 directed motility and phagocytosis through the modulation of RAC1 activity. The polypeptide is Active breakpoint cluster region-related protein (Homo sapiens (Human)).